We begin with the raw amino-acid sequence, 407 residues long: Aspartokinase (407 aa).

7–10 (KFGG) contacts ATP. 25–30 (RVIEEV) contributes to the substrate binding site. ATP is bound at residue serine 41. Substrate-binding positions include 47 to 49 (TDE), glutamate 74, 125 to 126 (LD), 150 to 153 (RGGS), and serine 153. ATP is bound by residues 173–174 (TD) and 179–184 (FTTDPR). ACT domains lie at 264 to 338 (VTVV…LAKV) and 340 to 407 (IVGS…AVRS). Substrate is bound by residues 289–291 (NVD), glutamine 295, 351–352 (VA), 365–366 (EI), and 372–373 (SE).

Belongs to the aspartokinase family. Tetramer consisting of 2 isoforms Alpha (catalytic and regulation) and of a homodimer of 2 isoforms Beta (regulation).

The enzyme catalyses L-aspartate + ATP = 4-phospho-L-aspartate + ADP. It participates in amino-acid biosynthesis; L-lysine biosynthesis via DAP pathway; (S)-tetrahydrodipicolinate from L-aspartate: step 1/4. The protein operates within amino-acid biosynthesis; L-methionine biosynthesis via de novo pathway; L-homoserine from L-aspartate: step 1/3. It functions in the pathway amino-acid biosynthesis; L-threonine biosynthesis; L-threonine from L-aspartate: step 1/5. Lysine-sensitive. Its function is as follows. Catalyzes the phosphorylation of the beta-carboxyl group of aspartic acid with ATP to yield 4-phospho-L-aspartate, which is involved in the branched biosynthetic pathway leading to the biosynthesis of amino acids threonine, isoleucine and methionine. The sequence is that of Aspartokinase (lysC) from Geobacillus stearothermophilus (Bacillus stearothermophilus).